A 313-amino-acid polypeptide reads, in one-letter code: Nucleoside diphosphate-linked moiety X motif 6 (313 aa).

The Nudix hydrolase domain maps to threonine 138–tyrosine 270.

This sequence belongs to the Nudix hydrolase family. Monomer and homodimer.

Its subcellular location is the cytoplasm. The protein localises to the nucleus. It localises to the mitochondrion. Functionally, may contribute to the regulation of cell proliferation. The sequence is that of Nucleoside diphosphate-linked moiety X motif 6 (Nudt6) from Mus musculus (Mouse).